The following is a 240-amino-acid chain: CRISPR system aCascade subunit Cas5 1 (240 aa).

The protein belongs to the CRISPR-associated protein Cas5 family. Subtype I-A/Apern subfamily. As to quaternary structure, part of the aCascade ribonucleoprotein complex, minimally composed of Csa2 and Cas5a, which binds crRNA. Other possible components of aCascade in strain P1 are Cas6b (SSO1437) and Csa5 (SSO1443), while SSO1399, Cas5b (SSO1400) and SSO1401 have sometimes been seen weakly associated. Csa2 is probably the major RNA-binding subunit. The Csa2-Cas5a-crRNA complex also binds target DNA homologous to crRNA, probably forming an R-loop. Purified aCascade forms a filament about 6 nm in width.

Functionally, CRISPR (clustered regularly interspaced short palindromic repeat) is an adaptive immune system that provides protection against mobile genetic elements (viruses, transposable elements and conjugative plasmids). CRISPR clusters contain spacers, sequences complementary to antecedent mobile elements, and target invading nucleic acids. CRISPR clusters are transcribed and processed into CRISPR RNA (crRNA). The chain is CRISPR system aCascade subunit Cas5 1 (cas5a) from Saccharolobus solfataricus (strain ATCC 35092 / DSM 1617 / JCM 11322 / P2) (Sulfolobus solfataricus).